A 252-amino-acid polypeptide reads, in one-letter code: NAD(P)H-quinone oxidoreductase subunit K (252 aa).

Residues Cys73, Cys74, Cys138, and Cys169 each coordinate [4Fe-4S] cluster. Over residues 225–236 (ASTQKQALSPSQ) the composition is skewed to polar residues. The disordered stretch occupies residues 225–252 (ASTQKQALSPSQEIPLEDQNEATKEIAQ).

The protein belongs to the complex I 20 kDa subunit family. NDH-1 can be composed of about 15 different subunits; different subcomplexes with different compositions have been identified which probably have different functions. Requires [4Fe-4S] cluster as cofactor.

It localises to the cellular thylakoid membrane. The catalysed reaction is a plastoquinone + NADH + (n+1) H(+)(in) = a plastoquinol + NAD(+) + n H(+)(out). The enzyme catalyses a plastoquinone + NADPH + (n+1) H(+)(in) = a plastoquinol + NADP(+) + n H(+)(out). Its function is as follows. NDH-1 shuttles electrons from an unknown electron donor, via FMN and iron-sulfur (Fe-S) centers, to quinones in the respiratory and/or the photosynthetic chain. The immediate electron acceptor for the enzyme in this species is believed to be plastoquinone. Couples the redox reaction to proton translocation, and thus conserves the redox energy in a proton gradient. Cyanobacterial NDH-1 also plays a role in inorganic carbon-concentration. The protein is NAD(P)H-quinone oxidoreductase subunit K of Prochlorococcus marinus (strain MIT 9211).